A 148-amino-acid polypeptide reads, in one-letter code: Lysozyme-like protein 6 (148 aa).

The first 19 residues, 1-19 (MTSPLLISLASCLVAVNQA), serve as a signal peptide directing secretion. The region spanning 20–148 (SLIGRCDLAK…SYWMTGCHLA (129 aa)) is the C-type lysozyme domain. 4 disulfides stabilise this stretch: C25–C145, C49–C133, C83–C98, and C94–C112. Active-site residues include E54 and D71.

It belongs to the glycosyl hydrolase 22 family. Monomer.

The protein resides in the secreted. Its subcellular location is the cell surface. It localises to the cell projection. It is found in the cilium. The protein localises to the flagellum. It carries out the reaction Hydrolysis of (1-&gt;4)-beta-linkages between N-acetylmuramic acid and N-acetyl-D-glucosamine residues in a peptidoglycan and between N-acetyl-D-glucosamine residues in chitodextrins.. Functionally, may be involved sperm-egg plasma membrane adhesion and fusion during fertilization. Exhibits bacteriolytic activity in vitro against Micrococcus luteus and Staphylococcus aureus. Shows weak bacteriolytic activity against Gram-positive bacteria at physiological pH. Bacteriolytic activity is pH-dependent, with a maximum at around pH 5.6. This Bos taurus (Bovine) protein is Lysozyme-like protein 6 (LYZL6).